We begin with the raw amino-acid sequence, 514 residues long: Peptide chain release factor 3 (514 aa).

In terms of domain architecture, tr-type G spans 8–268 (KKRRTFAIIS…TFLEFAPEPH (261 aa)). Residues 17–24 (SHPDAGKT), 85–89 (DTPGH), and 139–142 (NKLD) each bind GTP.

It belongs to the TRAFAC class translation factor GTPase superfamily. Classic translation factor GTPase family. PrfC subfamily.

The protein resides in the cytoplasm. In terms of biological role, increases the formation of ribosomal termination complexes and stimulates activities of RF-1 and RF-2. It binds guanine nucleotides and has strong preference for UGA stop codons. It may interact directly with the ribosome. The stimulation of RF-1 and RF-2 is significantly reduced by GTP and GDP, but not by GMP. The chain is Peptide chain release factor 3 from Streptococcus uberis (strain ATCC BAA-854 / 0140J).